A 111-amino-acid chain; its full sequence is 2Fe-2S ferredoxin (111 aa).

A 2Fe-2S ferredoxin-type domain is found at 2 to 104 (PKIVILPHQD…DLVVEIPRYT (103 aa)). Positions 42, 48, 51, and 87 each coordinate [2Fe-2S] cluster.

Belongs to the adrenodoxin/putidaredoxin family. [2Fe-2S] cluster is required as a cofactor.

Ferredoxin are iron-sulfur proteins that transfer electrons in a wide variety of metabolic reactions. Although the function of this ferredoxin is unknown it is probable that it has a role as a cellular electron transfer protein. Involved in the in vivo assembly of the Fe-S clusters in a wide variety of iron-sulfur proteins. The polypeptide is 2Fe-2S ferredoxin (fdx) (Escherichia coli O157:H7).